The following is a 457-amino-acid chain: Multidrug resistance protein MdtK (457 aa).

Residues 1-15 lie on the Cytoplasmic side of the membrane; it reads MQKYTSEARQLLALR. A helical membrane pass occupies residues 16 to 36; it reads IPVILAQVAQTAMGFVDTVMA. Over 37-52 the chain is Extracellular; the sequence is GGYSATDMAAVAIGTS. The chain crosses the membrane as a helical span at residues 53–73; that stretch reads IWLPAILFGHGLLLALTPVIA. Residues 74 to 92 lie on the Cytoplasmic side of the membrane; sequence QLNGSGRRERIAHQVRQGF. A helical transmembrane segment spans residues 93–113; the sequence is WLAGFVSVLVMIVLWNAGYII. The Extracellular portion of the chain corresponds to 114–126; the sequence is RSMHNIDPALADK. A helical membrane pass occupies residues 127–147; that stretch reads AVGYLRALLWGAPGYLFFQVA. The Cytoplasmic portion of the chain corresponds to 148-159; the sequence is RNQCEGLAKTKP. Residues 160–180 form a helical membrane-spanning segment; that stretch reads GMVMGFLGLLVNIPVNYIFIY. Topologically, residues 181–187 are extracellular; it reads GHFGMPE. Residues 188–208 traverse the membrane as a helical segment; the sequence is LGGIGCGVATAAVYWVMFIAM. The Cytoplasmic segment spans residues 209–242; the sequence is LSYIKHARSMRDIRNEKGFGKPDSVVMKRLIQLG. A helical membrane pass occupies residues 243-263; sequence LPIALALFFEVTLFAVVALLV. Residues 264-275 lie on the Extracellular side of the membrane; that stretch reads SPLGIVDVAGHQ. A helical membrane pass occupies residues 276-296; it reads IALNFSSLMFVLPMSLAAAVT. Topologically, residues 297 to 313 are cytoplasmic; it reads IRVGYRLGQGSTLDAQT. A helical transmembrane segment spans residues 314-334; it reads AARTGLGVGICMAVVTAIFTV. Residues 335–349 lie on the Extracellular side of the membrane; it reads TLRKHIALLYNDNPE. Residues 350-370 traverse the membrane as a helical segment; it reads VVALAAQLMLLAAVYQISDSI. The Cytoplasmic segment spans residues 371–386; that stretch reads QVIGSGILRGYKDTRS. The chain crosses the membrane as a helical span at residues 387–407; the sequence is IFFITFTAYWVLGLPSGYILA. At 408 to 417 the chain is on the extracellular side; that stretch reads LTDLVVDRMG. A helical membrane pass occupies residues 418–438; that stretch reads PAGFWMGFIIGLTSAAVLMML. Topologically, residues 439-457 are cytoplasmic; sequence RMRYLQRQPSAIILQRAAR.

Belongs to the multi antimicrobial extrusion (MATE) (TC 2.A.66.1) family. MdtK subfamily.

Its subcellular location is the cell inner membrane. In terms of biological role, multidrug efflux pump that functions probably as a Na(+)/drug antiporter. This Salmonella typhimurium (strain LT2 / SGSC1412 / ATCC 700720) protein is Multidrug resistance protein MdtK (mdtK).